We begin with the raw amino-acid sequence, 1113 residues long: StAR-related lipid transfer protein 13 (1113 aa).

M1 bears the N-acetylmethionine mark. In terms of domain architecture, SAM spans 55–122 (QQEIEAKEAC…LNKCASMRLD (68 aa)). Disordered regions lie at residues 164–218 (PVAD…HSAD), 230–256 (SSLP…RTRA), and 308–343 (NGDL…STVS). The segment covering 179–188 (NTASSESVLT) has biased composition (polar residues). The span at 197-214 (SIHSESSGGSDSRSQSGH) shows a compositional bias: low complexity. The segment covering 230-245 (SSLPQSTREGLNQSFH) has biased composition (polar residues). The segment covering 322–340 (GLPCSSKSSGESSPLENSS) has biased composition (low complexity). S411 carries the post-translational modification Phosphoserine. Composition is skewed to polar residues over residues 421–435 (SNGV…SLGR) and 529–549 (PNQV…TTPS). Disordered stretches follow at residues 421–443 (SNGV…GMRE) and 514–578 (HSTL…GASL). The Rho-GAP domain occupies 663 to 868 (VPLIVHVQRT…HMITECNRLF (206 aa)). The 211-residue stretch at 899 to 1109 (LAESGATFHT…SFQPLVAEGP (211 aa)) folds into the START domain.

Homodimer. Interacts with TAX1BP1.

It is found in the cytoplasm. The protein localises to the membrane. The protein resides in the mitochondrion membrane. It localises to the lipid droplet. In terms of biological role, may function as a GTPase-activating protein. The polypeptide is StAR-related lipid transfer protein 13 (Stard13) (Mus musculus (Mouse)).